Consider the following 484-residue polypeptide: Bifunctional protein HldE (484 aa).

Positions 1 to 320 (MDFSSITVLC…AELNAQDADA (320 aa)) are ribokinase. 195-198 (NARE) contacts ATP. Asp265 is an active-site residue. The cytidylyltransferase stretch occupies residues 349-484 (FTNGCFDIIH…RIRAAGAADR (136 aa)).

In the N-terminal section; belongs to the carbohydrate kinase PfkB family. The protein in the C-terminal section; belongs to the cytidylyltransferase family. In terms of assembly, homodimer.

The catalysed reaction is D-glycero-beta-D-manno-heptose 7-phosphate + ATP = D-glycero-beta-D-manno-heptose 1,7-bisphosphate + ADP + H(+). It catalyses the reaction D-glycero-beta-D-manno-heptose 1-phosphate + ATP + H(+) = ADP-D-glycero-beta-D-manno-heptose + diphosphate. Its pathway is nucleotide-sugar biosynthesis; ADP-L-glycero-beta-D-manno-heptose biosynthesis; ADP-L-glycero-beta-D-manno-heptose from D-glycero-beta-D-manno-heptose 7-phosphate: step 1/4. It functions in the pathway nucleotide-sugar biosynthesis; ADP-L-glycero-beta-D-manno-heptose biosynthesis; ADP-L-glycero-beta-D-manno-heptose from D-glycero-beta-D-manno-heptose 7-phosphate: step 3/4. Its function is as follows. Catalyzes the phosphorylation of D-glycero-D-manno-heptose 7-phosphate at the C-1 position to selectively form D-glycero-beta-D-manno-heptose-1,7-bisphosphate. In terms of biological role, catalyzes the ADP transfer from ATP to D-glycero-beta-D-manno-heptose 1-phosphate, yielding ADP-D-glycero-beta-D-manno-heptose. This is Bifunctional protein HldE from Gluconacetobacter diazotrophicus (strain ATCC 49037 / DSM 5601 / CCUG 37298 / CIP 103539 / LMG 7603 / PAl5).